The sequence spans 331 residues: High-affinity nickel-transport protein NixA (331 aa).

Residues 1–5 lie on the Cytoplasmic side of the membrane; sequence MKLWF. The helical transmembrane segment at 6–26 threads the bilayer; it reads PYFLAIVFLHALGLALLFMAN. At 27–33 the chain is on the periplasmic side; it reads NASFYAA. A helical membrane pass occupies residues 34-54; it reads ASMAYMLGAKHAFDADHIACI. Over 55-66 the chain is Cytoplasmic; it reads DNTIRKLTQQGK. A helical membrane pass occupies residues 67–87; sequence NAYGVGFYFSMGHSSVVILMT. The Periplasmic segment spans residues 88-113; sequence IISAFAIAWAKEHTPMLEEIGGVVGT. The chain crosses the membrane as a helical span at residues 114–135; that stretch reads LVSGLFLLIIGLLNAIILLDLL. Residues 136–178 lie on the Cytoplasmic side of the membrane; the sequence is KIFKKSHSNESLSQQQNEEIERLLTSRGLLNRFFKPLFNFVSK. A helical transmembrane segment spans residues 179-199; sequence SWHIYPIGFLFGLGFDTASEI. Residues 200–225 are Periplasmic-facing; that stretch reads ALLALSSSAIKVSMVGMLSLPILFAA. The chain crosses the membrane as a helical span at residues 226–246; it reads GMSLFDTLDGAFMLKAYDWAF. The Cytoplasmic portion of the chain corresponds to 247-252; the sequence is KTPLRK. A helical membrane pass occupies residues 253 to 273; sequence IYYNISITALSVFIALFIGLI. The Periplasmic portion of the chain corresponds to 274 to 302; the sequence is ELFQVVSEKLHLKFENRLLRALQSLEFTD. Residues 303 to 322 traverse the membrane as a helical segment; sequence LGYYLVGLFVIAFLGSFFLW. Over 323–331 the chain is Cytoplasmic; that stretch reads KIKFSKLES.

This sequence belongs to the NiCoT transporter (TC 2.A.52) family.

Its subcellular location is the cell inner membrane. In terms of biological role, high-affinity nickel intake protein. Imports nickel ions in an energy-dependent fashion. Necessary for the expression of catalytically active urease. In Helicobacter pylori (strain ATCC 700392 / 26695) (Campylobacter pylori), this protein is High-affinity nickel-transport protein NixA (nixA).